The sequence spans 274 residues: Undecaprenyl-diphosphatase 1 (274 aa).

Helical transmembrane passes span 8–28 (WLLIKYLLLGLFQGFTEPIPV), 45–65 (IEGLSFEVMVNFASLFAVIAI), 92–112 (FRISFYLLLATVPAVLAALLF), 120–140 (LKQLHVIAFALLITGMALWLI), 195–215 (FSFFLYIPISLGSGVLAISDI), 230–250 (IAFIGSFIASYVSLLWFMNIM), and 253–273 (GKLIYFALYCWLAGLIVLSLL).

Belongs to the UppP family.

It localises to the cell membrane. The catalysed reaction is di-trans,octa-cis-undecaprenyl diphosphate + H2O = di-trans,octa-cis-undecaprenyl phosphate + phosphate + H(+). Functionally, catalyzes the dephosphorylation of undecaprenyl diphosphate (UPP). Confers resistance to bacitracin. This chain is Undecaprenyl-diphosphatase 1, found in Halalkalibacterium halodurans (strain ATCC BAA-125 / DSM 18197 / FERM 7344 / JCM 9153 / C-125) (Bacillus halodurans).